Reading from the N-terminus, the 170-residue chain is Lipoprotein signal peptidase (170 aa).

3 helical membrane passes run I13–I33, L72–E92, and I96–I113. Catalysis depends on residues D124 and D146. A helical transmembrane segment spans residues F142 to F162.

It belongs to the peptidase A8 family.

The protein localises to the cell inner membrane. It catalyses the reaction Release of signal peptides from bacterial membrane prolipoproteins. Hydrolyzes -Xaa-Yaa-Zaa-|-(S,diacylglyceryl)Cys-, in which Xaa is hydrophobic (preferably Leu), and Yaa (Ala or Ser) and Zaa (Gly or Ala) have small, neutral side chains.. Its pathway is protein modification; lipoprotein biosynthesis (signal peptide cleavage). Its function is as follows. This protein specifically catalyzes the removal of signal peptides from prolipoproteins. This Borrelia turicatae (strain 91E135) protein is Lipoprotein signal peptidase.